A 206-amino-acid polypeptide reads, in one-letter code: Urease accessory protein UreG (206 aa).

13-20 is a GTP binding site; the sequence is GPVGSGKT.

It belongs to the SIMIBI class G3E GTPase family. UreG subfamily. In terms of assembly, homodimer. UreD, UreF and UreG form a complex that acts as a GTP-hydrolysis-dependent molecular chaperone, activating the urease apoprotein by helping to assemble the nickel containing metallocenter of UreC. The UreE protein probably delivers the nickel.

The protein resides in the cytoplasm. Its function is as follows. Facilitates the functional incorporation of the urease nickel metallocenter. This process requires GTP hydrolysis, probably effectuated by UreG. This is Urease accessory protein UreG from Haloquadratum walsbyi (strain DSM 16790 / HBSQ001).